A 352-amino-acid chain; its full sequence is Ion-translocating oxidoreductase complex subunit D (352 aa).

4 helical membrane-spanning segments follow: residues 20–40 (IMLL…WFFG), 42–62 (GTLF…AIVL), 69–91 (VASH…SIPP), and 123–143 (PAMI…TSWL). The residue at position 187 (T187) is an FMN phosphoryl threonine. 5 consecutive transmembrane segments (helical) span residues 215–235 (LAGV…VFLL), 242–262 (WHIP…GWLF), 267–287 (LASP…FFIL), 301–321 (LIFG…GGYP), and 322–342 (DGVA…DYYT).

This sequence belongs to the NqrB/RnfD family. As to quaternary structure, the complex is composed of six subunits: RsxA, RsxB, RsxC, RsxD, RsxE and RsxG. It depends on FMN as a cofactor.

Its subcellular location is the cell inner membrane. In terms of biological role, part of a membrane-bound complex that couples electron transfer with translocation of ions across the membrane. Required to maintain the reduced state of SoxR. The protein is Ion-translocating oxidoreductase complex subunit D of Salmonella choleraesuis (strain SC-B67).